The chain runs to 200 residues: Large ribosomal subunit protein uL4 (200 aa).

Residues glycine 38–alanine 67 are disordered.

It belongs to the universal ribosomal protein uL4 family. As to quaternary structure, part of the 50S ribosomal subunit.

In terms of biological role, one of the primary rRNA binding proteins, this protein initially binds near the 5'-end of the 23S rRNA. It is important during the early stages of 50S assembly. It makes multiple contacts with different domains of the 23S rRNA in the assembled 50S subunit and ribosome. Functionally, forms part of the polypeptide exit tunnel. The protein is Large ribosomal subunit protein uL4 of Pseudomonas paraeruginosa (strain DSM 24068 / PA7) (Pseudomonas aeruginosa (strain PA7)).